Reading from the N-terminus, the 230-residue chain is Antiholin-like protein LrgB (230 aa).

Transmembrane regions (helical) follow at residues 5–25 (MTPYFGIVVSLIAYGIGTLLF), 30–50 (GFFLFTPLFVAMVLGIVFLKV), 61–81 (GGKMISFFLEPATIAFAIPLY), 92–112 (WQILSAIVVGSICSVVVVYIV), 126–146 (MLPQAATTAIALPISESIGGI), 149–169 (ITSFAVIFNAVIVYALGALFL), 177–197 (PIAKGLALGTAGHALGVAVGI), and 209–229 (IAVTVVGVVTVVVIPMFMPFI).

This sequence belongs to the CidB/LrgB family. LrgB subfamily.

Its subcellular location is the cell membrane. Inhibits the expression or activity of extracellular murein hydrolases by interacting, possibly with LrgA, with the holin-like protein CidA. The LrgAB and CidA proteins may affect the proton motive force of the membrane. May be involved in programmed cell death (PCD), possibly triggering PCD in response to antibiotics and environmental stresses. The protein is Antiholin-like protein LrgB of Bacillus mycoides (strain KBAB4) (Bacillus weihenstephanensis).